We begin with the raw amino-acid sequence, 1072 residues long: Zn(2)-C6 fungal-type transcription factor FTF2 (1072 aa).

Residues 179–206 (CIACRRKKIRCSGEKPACKHCLRSRIPC) constitute a DNA-binding region (zn(2)-C6 fungal-type).

Its subcellular location is the nucleus. In terms of biological role, zn(2)-C6 fungal-type transcription factor that has a role in conidia production and also in plant colonization. Acts as a negative regulator of the production of macroconidia and is required for full virulence and the positive regulation of SIX effectors. In addition, FTF2 is also involved in the regulation of class II hydrophobins FOXG_02746 and FOXG_02748 likely required for plant colonization. This chain is Zn(2)-C6 fungal-type transcription factor FTF2, found in Fusarium oxysporum f. sp. lycopersici (strain 4287 / CBS 123668 / FGSC 9935 / NRRL 34936) (Fusarium vascular wilt of tomato).